The following is a 940-amino-acid chain: UvrABC system protein A (940 aa).

31 to 38 serves as a coordination point for ATP; that stretch reads GLSGSGKS. The C4-type zinc finger occupies 252 to 279; that stretch reads CPHCGYSMQELEPRLFSFNNPAGACGTC. 2 ABC transporter domains span residues 309–586 and 606–936; these read WDQK…PDSL and RDKN…RFLK. 639–646 lines the ATP pocket; sequence GVSGSGKS. The C4-type zinc-finger motif lies at 739–765; the sequence is CEACQGDGVIKVEMHFLPDVYVPCDVC.

This sequence belongs to the ABC transporter superfamily. UvrA family. As to quaternary structure, forms a heterotetramer with UvrB during the search for lesions.

The protein resides in the cytoplasm. Its function is as follows. The UvrABC repair system catalyzes the recognition and processing of DNA lesions. UvrA is an ATPase and a DNA-binding protein. A damage recognition complex composed of 2 UvrA and 2 UvrB subunits scans DNA for abnormalities. When the presence of a lesion has been verified by UvrB, the UvrA molecules dissociate. This chain is UvrABC system protein A, found in Vibrio vulnificus (strain YJ016).